The primary structure comprises 841 residues: Toll-like receptor 4 (841 aa).

Residues 1 to 23 (MIPRIRLAVATIPAMAFLSCLRS) form the signal peptide. Residues 24–632 (ESWDPCVQVV…FRNATCQISE (609 aa)) are Extracellular-facing. Cysteines 29 and 40 form a disulfide. Asn35 is a glycosylation site (N-linked (GlcNAc...) asparagine). LRR repeat units follow at residues 55–76 (SVKI…SFSS), 79–100 (ELQV…AYQG), 103–124 (YLST…AFSG), 127–148 (SLQK…PIGH), 151–172 (TLNE…EYFS), 176–197 (NLEH…HLQV), and 205–225 (NLSL…AFNK). N-linked (GlcNAc...) asparagine glycans are attached at residues Asn205, Asn238, Asn282, and Asn309. A disulfide bond links Cys281 and Cys306. LRR repeat units lie at residues 374–395 (NLQF…SHNE), 400–422 (KLKH…MGLE), 423–444 (QLEY…SIFL), 448–469 (NLHY…IFAG), 472–495 (SLQT…FTDL), 497–518 (NLIL…AFHS), 521–542 (RLQV…PYKP), and 545–568 (SLRI…QHLP). Cysteines 390 and 391 form a disulfide. The N-linked (GlcNAc...) asparagine glycan is linked to Asn526. Asn575 carries an N-linked (GlcNAc...) asparagine glycan. The LRRCT domain occupies 579-630 (NDFSCACEHQTFLQWVKDQKQLLVGAEQMVCTQPLEMQDLPVLSFRNATCQI). Cystine bridges form between Cys583–Cys609 and Cys585–Cys628. An N-linked (GlcNAc...) asparagine glycan is attached at Asn625. The helical transmembrane segment at 633-653 (AVISASVLTFLLVSVAGILVY) threads the bilayer. The Cytoplasmic portion of the chain corresponds to 654–841 (KFYFHLLLFV…SNQHDTTAFT (188 aa)). One can recognise a TIR domain in the interval 673-816 (STYDAFVIYS…IFWRRLKKAL (144 aa)).

The protein belongs to the Toll-like receptor family. As to quaternary structure, belongs to the lipopolysaccharide (LPS) receptor, a multi-protein complex containing at least CD14, LY96 and TLR4. Binding to bacterial LPS leads to homodimerization. Interacts with LY96 via the extracellular domain. Interacts with MYD88 and TIRAP via their respective TIR domains. Interacts with NOX4. Interacts with CNPY3 and HSP90B1; this interaction is required for proper folding in the endoplasmic reticulum. Interacts with MAP3K21; this interaction leads to negative regulation of TLR4 signaling. Interacts with CD36, following CD36 stimulation by oxLDL or amyloid-beta 42, and forms a heterodimer with TLR6. The trimeric complex is internalized and triggers inflammatory response. LYN kinase activity facilitates TLR4-TLR6 heterodimerization and signal initiation. Interacts with TICAM1 in response to LPS in a WDFY1-dependent manner. Interacts with WDFY1 in response to LPS. Interacts with SMPDL3B. Interacts with CEACAM1; upon lipopolysaccharide stimulation, forms a complex including TLR4 and the phosphorylated form of SYK and CEACAM1, which in turn, recruits PTPN6 that dephosphorylates SYK, reducing the production of reactive oxygen species (ROS) and lysosome disruption, which in turn, reduces the activity of the inflammasome. Interacts with RFTN1; the interaction occurs in response to lipopolysaccharide stimulation. Interacts with SCIMP; the interaction occurs in response to lipopolysaccharide stimulation and is enhanced by phosphorylation of SCIMP by LYN. This interaction facilitates the phosphorylation of TLR4 by LYN which elicits a selective cytokine response in macrophages. Interacts with TRAF3IP3. Interacts with TREM1; this interaction enhances TLR4-mediated inflammatory response. Interacts with ZG16B/PAUF. Interacts with CD82; this interaction inhibits TLR4-mediated signaling pathway. Phosphorylated on tyrosine residues by LYN after binding lipopolysaccharide. In terms of processing, ubiquitinated by RNF128 via 'Lys-28'-linked polyubiquitin chains, leading to proteasomal degradation.

The protein localises to the cell membrane. The protein resides in the early endosome. Its subcellular location is the cell projection. It is found in the ruffle. Functionally, transmembrane receptor that functions as a pattern recognition receptor recognizing pathogen- and damage-associated molecular patterns (PAMPs and DAMPs) to induce innate immune responses via downstream signaling pathways. At the plasma membrane, cooperates with LY96 to mediate the innate immune response to bacterial lipopolysaccharide (LPS). Also involved in LPS-independent inflammatory responses triggered by free fatty acids, such as palmitate, and Ni(2+). Mechanistically, acts via MYD88, TIRAP and TRAF6, leading to NF-kappa-B activation, cytokine secretion and the inflammatory response. Alternatively, CD14-mediated TLR4 internalization via endocytosis is associated with the initiation of a MYD88-independent signaling via the TICAM1-TBK1-IRF3 axis leading to type I interferon production. In addition to the secretion of proinflammatory cytokines, initiates the activation of NLRP3 inflammasome and formation of a positive feedback loop between autophagy and NF-kappa-B signaling cascade. In complex with TLR6, promotes inflammation in monocytes/macrophages by associating with TLR6 and the receptor CD86. Upon ligand binding, such as oxLDL or amyloid-beta 42, the TLR4:TLR6 complex is internalized and triggers inflammatory response, leading to NF-kappa-B-dependent production of CXCL1, CXCL2 and CCL9 cytokines, via MYD88 signaling pathway, and CCL5 cytokine, via TICAM1 signaling pathway. In myeloid dendritic cells, vesicular stomatitis virus glycoprotein G but not LPS promotes the activation of IRF7, leading to type I IFN production in a CD14-dependent manner. The chain is Toll-like receptor 4 (TLR4) from Sus scrofa (Pig).